We begin with the raw amino-acid sequence, 134 residues long: Small ribosomal subunit protein uS8 (134 aa).

This sequence belongs to the universal ribosomal protein uS8 family. In terms of assembly, part of the 30S ribosomal subunit. Contacts proteins S5 and S12.

One of the primary rRNA binding proteins, it binds directly to 16S rRNA central domain where it helps coordinate assembly of the platform of the 30S subunit. This Pseudothermotoga lettingae (strain ATCC BAA-301 / DSM 14385 / NBRC 107922 / TMO) (Thermotoga lettingae) protein is Small ribosomal subunit protein uS8.